The following is a 423-amino-acid chain: Gamma-glutamyl phosphate reductase (423 aa).

Belongs to the gamma-glutamyl phosphate reductase family.

It localises to the cytoplasm. The enzyme catalyses L-glutamate 5-semialdehyde + phosphate + NADP(+) = L-glutamyl 5-phosphate + NADPH + H(+). The protein operates within amino-acid biosynthesis; L-proline biosynthesis; L-glutamate 5-semialdehyde from L-glutamate: step 2/2. Catalyzes the NADPH-dependent reduction of L-glutamate 5-phosphate into L-glutamate 5-semialdehyde and phosphate. The product spontaneously undergoes cyclization to form 1-pyrroline-5-carboxylate. The polypeptide is Gamma-glutamyl phosphate reductase (Pseudomonas putida (strain W619)).